The sequence spans 143 residues: Envelope protein A28 homolog (143 aa).

A helical; Signal-anchor for type II membrane protein membrane pass occupies residues Met1 to Phe21. Residues Gln22–Ser143 are Virion surface-facing.

Belongs to the poxviridae A28 protein family. Contains two intramolecular disulfide bonds. They are created by the viral disulfide bond formation pathway, a poxvirus-specific pathway that operates on the cytoplasmic side of the MV membranes.

The protein resides in the virion membrane. Functionally, envelope protein required for virus entry into host cell and for cell-cell fusion (syncytium formation). This chain is Envelope protein A28 homolog, found in Amsacta (AmEPV).